The following is a 367-amino-acid chain: Undecaprenyl-phosphate alpha-N-acetylglucosaminyl 1-phosphate transferase (367 aa).

9 helical membrane passes run 3 to 23 (LLTA…FIFL), 45 to 65 (GVIP…MFGL), 69 to 89 (YIPH…VGAM), 129 to 149 (WELV…WAAI), 158 to 178 (IDGL…LILW), 187 to 207 (MWCF…LGIL), 213 to 233 (VFMG…LLLE), 242 to 262 (ISPV…VAIM), and 318 to 338 (VPEW…GYCI).

Belongs to the glycosyltransferase 4 family. WecA subfamily. Mg(2+) serves as cofactor. Mn(2+) is required as a cofactor.

Its subcellular location is the cell inner membrane. The enzyme catalyses di-trans,octa-cis-undecaprenyl phosphate + UDP-N-acetyl-alpha-D-glucosamine = N-acetyl-alpha-D-glucosaminyl-di-trans,octa-cis-undecaprenyl diphosphate + UMP. It participates in bacterial outer membrane biogenesis; LPS O-antigen biosynthesis. Its pathway is bacterial outer membrane biogenesis; enterobacterial common antigen biosynthesis. In terms of biological role, catalyzes the transfer of the GlcNAc-1-phosphate moiety from UDP-GlcNAc onto the carrier lipid undecaprenyl phosphate (C55-P), yielding GlcNAc-pyrophosphoryl-undecaprenyl (GlcNAc-PP-C55). The sequence is that of Undecaprenyl-phosphate alpha-N-acetylglucosaminyl 1-phosphate transferase from Salmonella typhi.